The following is a 919-amino-acid chain: Isoleucine--tRNA ligase (919 aa).

The 'HIGH' region signature appears at 57–67 (PYANGHIHIGT). Residue Glu553 participates in L-isoleucyl-5'-AMP binding. The 'KMSKS' region signature appears at 594–598 (KMSKS). Residue Lys597 coordinates ATP. Residues Cys887, Cys890, Cys907, and Cys910 each contribute to the Zn(2+) site.

The protein belongs to the class-I aminoacyl-tRNA synthetase family. IleS type 1 subfamily. Monomer. Zn(2+) is required as a cofactor.

The protein resides in the cytoplasm. It catalyses the reaction tRNA(Ile) + L-isoleucine + ATP = L-isoleucyl-tRNA(Ile) + AMP + diphosphate. Its function is as follows. Catalyzes the attachment of isoleucine to tRNA(Ile). As IleRS can inadvertently accommodate and process structurally similar amino acids such as valine, to avoid such errors it has two additional distinct tRNA(Ile)-dependent editing activities. One activity is designated as 'pretransfer' editing and involves the hydrolysis of activated Val-AMP. The other activity is designated 'posttransfer' editing and involves deacylation of mischarged Val-tRNA(Ile). The protein is Isoleucine--tRNA ligase of Thermotoga petrophila (strain ATCC BAA-488 / DSM 13995 / JCM 10881 / RKU-1).